Here is a 200-residue protein sequence, read N- to C-terminus: LHFPL tetraspan subfamily member 6 protein (200 aa).

A signal peptide spans 1 to 23; sequence MASSLTCTGVIWALLSFLSAATS. 3 helical membrane-spanning segments follow: residues 84-104, 123-143, and 166-186; these read ICTI…LTAL, GIQF…PLGW, and IGWA…LCTW.

The protein belongs to the LHFP family.

The protein resides in the membrane. In Rattus norvegicus (Rat), this protein is LHFPL tetraspan subfamily member 6 protein.